The primary structure comprises 712 residues: Polyribonucleotide nucleotidyltransferase (712 aa).

Asp-493 and Asp-499 together coordinate Mg(2+). One can recognise a KH domain in the interval 560-619 (PRLLTFKVDPEDIGKIIGPGGKMVRSITEATGAKVDISDDGTITVSSSVGGQAEAARAMI). One can recognise an S1 motif domain in the interval 629-697 (GQVYLGKVTR…HKGRVNLTRL (69 aa)).

It belongs to the polyribonucleotide nucleotidyltransferase family. Mg(2+) serves as cofactor.

It is found in the cytoplasm. It carries out the reaction RNA(n+1) + phosphate = RNA(n) + a ribonucleoside 5'-diphosphate. Involved in mRNA degradation. Catalyzes the phosphorolysis of single-stranded polyribonucleotides processively in the 3'- to 5'-direction. This is Polyribonucleotide nucleotidyltransferase from Synechococcus sp. (strain JA-3-3Ab) (Cyanobacteria bacterium Yellowstone A-Prime).